A 298-amino-acid polypeptide reads, in one-letter code: tRNA uridine(34) hydroxylase (298 aa).

The Rhodanese domain occupies 123–217 (QNPDVTLVDT…YLEEIPVAES (95 aa)). Residue Cys-177 is the Cysteine persulfide intermediate of the active site.

Belongs to the TrhO family.

The catalysed reaction is uridine(34) in tRNA + AH2 + O2 = 5-hydroxyuridine(34) in tRNA + A + H2O. In terms of biological role, catalyzes oxygen-dependent 5-hydroxyuridine (ho5U) modification at position 34 in tRNAs. This Picosynechococcus sp. (strain ATCC 27264 / PCC 7002 / PR-6) (Agmenellum quadruplicatum) protein is tRNA uridine(34) hydroxylase.